A 409-amino-acid polypeptide reads, in one-letter code: LL-diaminopimelate aminotransferase (409 aa).

The substrate site is built by Tyr15 and Gly42. Residues Tyr72, 108 to 109 (AK), Tyr132, Asn186, Tyr217, and 245 to 247 (SFS) contribute to the pyridoxal 5'-phosphate site. 3 residues coordinate substrate: Lys109, Tyr132, and Asn186. Lys248 carries the N6-(pyridoxal phosphate)lysine modification. Residues Arg256 and Asn291 each contribute to the pyridoxal 5'-phosphate site. Substrate-binding residues include Asn291 and Arg387.

This sequence belongs to the class-I pyridoxal-phosphate-dependent aminotransferase family. LL-diaminopimelate aminotransferase subfamily. As to quaternary structure, homodimer. The cofactor is pyridoxal 5'-phosphate.

The enzyme catalyses (2S,6S)-2,6-diaminopimelate + 2-oxoglutarate = (S)-2,3,4,5-tetrahydrodipicolinate + L-glutamate + H2O + H(+). The protein operates within amino-acid biosynthesis; L-lysine biosynthesis via DAP pathway; LL-2,6-diaminopimelate from (S)-tetrahydrodipicolinate (aminotransferase route): step 1/1. Functionally, involved in the synthesis of meso-diaminopimelate (m-DAP or DL-DAP), required for both lysine and peptidoglycan biosynthesis. Catalyzes the direct conversion of tetrahydrodipicolinate to LL-diaminopimelate. In Parabacteroides distasonis (strain ATCC 8503 / DSM 20701 / CIP 104284 / JCM 5825 / NCTC 11152), this protein is LL-diaminopimelate aminotransferase.